The primary structure comprises 112 residues: UPF0102 protein C8J_0145 (112 aa).

It belongs to the UPF0102 family.

The polypeptide is UPF0102 protein C8J_0145 (Campylobacter jejuni subsp. jejuni serotype O:6 (strain 81116 / NCTC 11828)).